We begin with the raw amino-acid sequence, 389 residues long: 5-hydroxytryptamine receptor 1B (389 aa).

The interval 1-27 is disordered; the sequence is MEAAGAPCAPPPPAGSQTGAPPANLSS. The Extracellular portion of the chain corresponds to 1 to 45; that stretch reads MEAAGAPCAPPPPAGSQTGAPPANLSSAPHNCSAEGYIYQDSVAL. The span at 16 to 27 shows a compositional bias: polar residues; that stretch reads SQTGAPPANLSS. N-linked (GlcNAc...) asparagine glycans are attached at residues Asn-24 and Asn-31. The helical transmembrane segment at 46–71 threads the bilayer; it reads PWKVLLVILLALITLATTLSNAFVIA. Over 72 to 85 the chain is Cytoplasmic; that stretch reads TVYRTRKLHTPANY. A helical membrane pass occupies residues 86–110; the sequence is LIASLAVTDLLVSILVMPISTMYTV. The Extracellular segment spans residues 111-118; that stretch reads TGRWTLGQ. Residues 119–144 form a helical membrane-spanning segment; it reads VVCDLWLSSDITCCTASILHLCVIAL. Cys-121 and Cys-198 are oxidised to a cystine. Ergotamine is bound by residues Asp-128 and Thr-133. Residues 145 to 147 carry the DRY motif; important for ligand-induced conformation changes and signaling motif; the sequence is DRY. Over 145-164 the chain is Cytoplasmic; that stretch reads DRYWAITDAVEYSAKRTPKR. A helical transmembrane segment spans residues 165 to 183; sequence AAVMIALVWVFSISISLPP. Over 184–204 the chain is Extracellular; that stretch reads FFWRQAKAEEEVSDCVVNTDH. Val-200 is an ergotamine binding site. Residues 205-228 traverse the membrane as a helical segment; it reads ILYTVYSTVGAFYFPTLLLIALYG. At 229–314 the chain is on the cytoplasmic side; sequence RIYVEARSRI…AARERKATKT (86 aa). The segment covering 258 to 271 has biased composition (polar residues); the sequence is DSPGSTSSVTSVNS. The tract at residues 258–281 is disordered; the sequence is DSPGSTSSVTSVNSRAPDVPSESG. The chain crosses the membrane as a helical span at residues 315–336; sequence LGIILGAFIVCWLPFFIISLVM. At 337-346 the chain is on the extracellular side; that stretch reads PICKDACWFH. The helical transmembrane segment at 347–369 threads the bilayer; it reads LAIFDFFTWLGYLNSLINPIIYT. An NPxxY motif; important for ligand-induced conformation changes and signaling motif is present at residues 364 to 368; it reads NPIIY. Residues 370-389 are Cytoplasmic-facing; it reads MSNEDFKQAFHKLIRFKCAG. Cys-387 carries S-palmitoyl cysteine lipidation.

This sequence belongs to the G-protein coupled receptor 1 family. As to quaternary structure, homodimer. Heterodimer with HTR1D. Phosphorylated. Desensitization of the receptor may be mediated by its phosphorylation. Post-translationally, palmitoylated.

Its subcellular location is the cell membrane. G-protein coupled receptor for 5-hydroxytryptamine (serotonin). Also functions as a receptor for ergot alkaloid derivatives, various anxiolytic and antidepressant drugs and other psychoactive substances, such as lysergic acid diethylamide (LSD). Ligand binding causes a conformation change that triggers signaling via guanine nucleotide-binding proteins (G proteins) and modulates the activity of downstream effectors, such as adenylate cyclase. HTR1B is coupled to G(i)/G(o) G alpha proteins and mediates inhibitory neurotransmission by inhibiting adenylate cyclase activity. Arrestin family members inhibit signaling via G proteins and mediate activation of alternative signaling pathways. Regulates the release of 5-hydroxytryptamine, dopamine and acetylcholine in the brain, and thereby affects neural activity, nociceptive processing, pain perception, mood and behavior. Besides, plays a role in vasoconstriction of cerebral arteries. This is 5-hydroxytryptamine receptor 1B (HTR1B) from Canis lupus familiaris (Dog).